The primary structure comprises 278 residues: Large ribosomal subunit protein uL2 (278 aa).

2 disordered regions span residues 27–57 and 224–278; these read STPE…QGGG and VAMN…NKKR. The span at 258-278 shows a compositional bias: basic residues; it reads RSPKKASSKYIVRRRKTNKKR.

It belongs to the universal ribosomal protein uL2 family. As to quaternary structure, part of the 50S ribosomal subunit. Forms a bridge to the 30S subunit in the 70S ribosome.

One of the primary rRNA binding proteins. Required for association of the 30S and 50S subunits to form the 70S ribosome, for tRNA binding and peptide bond formation. It has been suggested to have peptidyltransferase activity; this is somewhat controversial. Makes several contacts with the 16S rRNA in the 70S ribosome. The sequence is that of Large ribosomal subunit protein uL2 from Streptomyces avermitilis (strain ATCC 31267 / DSM 46492 / JCM 5070 / NBRC 14893 / NCIMB 12804 / NRRL 8165 / MA-4680).